The following is a 285-amino-acid chain: Transmembrane protein 53-A (285 aa).

Residues 165-185 form a helical membrane-spanning segment; the sequence is FLALAAFAILVIILRILLYPL.

This sequence belongs to the TMEM53 family.

Its subcellular location is the nucleus outer membrane. Its function is as follows. Ensures normal bone formation, through the negative regulation of bone morphogenetic protein (BMP) signaling in osteoblast lineage cells by blocking cytoplasm-nucleus translocation of phosphorylated SMAD proteins. The protein is Transmembrane protein 53-A (tmem53-a) of Xenopus laevis (African clawed frog).